The sequence spans 281 residues: Ribonuclease HII (281 aa).

The interval 1–46 is disordered; it reads MIRDTKQPIKVPAKPASRSGGKAKTVKPKTIKPKTSAKAAAAKPAS. Residues 33–46 show a composition bias toward low complexity; it reads PKTSAKAAAAKPAS. One can recognise an RNase H type-2 domain in the interval 73–261; the sequence is WPIAGCDEAG…VAAAWQKIEG (189 aa). A divalent metal cation contacts are provided by Asp79, Glu80, and Asp170.

Belongs to the RNase HII family. Requires Mn(2+) as cofactor. Mg(2+) is required as a cofactor.

The protein localises to the cytoplasm. The enzyme catalyses Endonucleolytic cleavage to 5'-phosphomonoester.. Functionally, endonuclease that specifically degrades the RNA of RNA-DNA hybrids. This is Ribonuclease HII from Rhodopseudomonas palustris (strain TIE-1).